Here is a 63-residue protein sequence, read N- to C-terminus: Ct-IT2 (63 aa).

An LCN-type CS-alpha/beta domain is found at 1-63; the sequence is KDGYPMDSKG…VWDKATNKCG (63 aa). 4 cysteine pairs are disulfide-bonded: C11–C62, C15–C36, C22–C43, and C26–C45. The residue at position 63 (G63) is a Glycine amide.

Expressed by the venom gland.

The protein resides in the secreted. Functionally, beta toxins bind voltage-independently at site-4 of sodium channels (Nav) and shift the voltage of activation toward more negative potentials thereby affecting sodium channel activation and promoting spontaneous and repetitive firing. Is highly active on insects, since it provokes paralysis and death when injected into crickets. This is Ct-IT2 from Centruroides tecomanus (Scorpion).